The primary structure comprises 504 residues: Arabinose import ATP-binding protein AraG (504 aa).

ABC transporter domains follow at residues 8 to 243 and 256 to 499; these read LSFR…MVGR and YGEE…MPKV. Residue 40 to 47 participates in ATP binding; that stretch reads GENGAGKS.

It belongs to the ABC transporter superfamily. Arabinose importer (TC 3.A.1.2.2) family. In terms of assembly, the complex is composed of two ATP-binding proteins (AraG), two transmembrane proteins (AraH) and a solute-binding protein (AraF).

The protein localises to the cell inner membrane. It carries out the reaction L-arabinose(out) + ATP + H2O = L-arabinose(in) + ADP + phosphate + H(+). Functionally, part of the ABC transporter complex AraFGH involved in arabinose import. Responsible for energy coupling to the transport system. The sequence is that of Arabinose import ATP-binding protein AraG from Escherichia coli (strain UTI89 / UPEC).